An 853-amino-acid chain; its full sequence is DNA mismatch repair protein MutS (853 aa).

ATP is bound at residue glycine 614 to serine 621.

This sequence belongs to the DNA mismatch repair MutS family.

In terms of biological role, this protein is involved in the repair of mismatches in DNA. It is possible that it carries out the mismatch recognition step. This protein has a weak ATPase activity. This Shigella dysenteriae serotype 1 (strain Sd197) protein is DNA mismatch repair protein MutS.